The chain runs to 215 residues: A-type ATP synthase subunit E (215 aa).

It belongs to the V-ATPase E subunit family. Has multiple subunits with at least A(3), B(3), C, D, E, F, H, I and proteolipid K(x).

It localises to the cell membrane. Component of the A-type ATP synthase that produces ATP from ADP in the presence of a proton gradient across the membrane. The polypeptide is A-type ATP synthase subunit E (Thermofilum pendens (strain DSM 2475 / Hrk 5)).